The chain runs to 275 residues: Catechol 1,2-dioxygenase 2 (275 aa).

4 residues coordinate Fe cation: Tyr-158, Tyr-192, His-216, and His-218.

Belongs to the intradiol ring-cleavage dioxygenase family. Homodimer. The cofactor is Fe(3+).

The catalysed reaction is catechol + O2 = cis,cis-muconate + 2 H(+). The protein operates within aromatic compound metabolism; beta-ketoadipate pathway; 5-oxo-4,5-dihydro-2-furylacetate from catechol: step 1/3. In terms of biological role, can cleave 4-methyl-, 4-chloro-, and 3-methoxycatechol at lower rates than catechol, but has no activity with 4-nitrocatechol or protocatechuic acid. The polypeptide is Catechol 1,2-dioxygenase 2 (catA2) (Acinetobacter lwoffii).